The sequence spans 517 residues: Pentatricopeptide repeat-containing protein At1g77360, mitochondrial (517 aa).

A mitochondrion-targeting transit peptide spans 1 to 59 (MKRFRIRSVDFRQLVNFFSFMRWECSSSATVWVRFNMTIRIINRQSRFCCKSFLSARLY). PPR repeat units lie at residues 133 to 163 (SVRAYHMMIESTAKIRQYKLMWDLINAMRKK), 167 to 201 (NVETFCIVMRKYARAQKVDEAIYAFNVMEKYDLPP), 202 to 232 (NLVAFNGLLSALCKSKNVRKAQEVFENMRDR), 236 to 270 (DSKTYSILLEGWGKEPNLPKAREVFREMIDAGCHP), 271 to 305 (DIVTYSIMVDILCKAGRVDEALGIVRSMDPSICKP), 306 to 340 (TTFIYSVLVHTYGTENRLEEAVDTFLEMERSGMKA), 341 to 375 (DVAVFNSLIGAFCKANRMKNVYRVLKEMKSKGVTP), 376 to 406 (NSKSCNIILRHLIERGEKDEAFDVFRKMIKV), 410 to 444 (DADTYTMVIKMFCEKKEMETADKVWKYMRKKGVFP), and 445 to 479 (SMHTFSVLINGLCEERTTQKACVLLEEMIEMGIRP).

This sequence belongs to the PPR family. P subfamily.

The protein localises to the mitochondrion. The protein is Pentatricopeptide repeat-containing protein At1g77360, mitochondrial of Arabidopsis thaliana (Mouse-ear cress).